A 393-amino-acid polypeptide reads, in one-letter code: Phosphoenolpyruvate/phosphate translocator 3, chloroplastic (393 aa).

A chloroplast-targeting transit peptide spans 1-65 (MQRAAAASRA…LSGGRAVTAR (65 aa)). Transmembrane regions (helical) follow at residues 89 to 109 (LAET…NIYF), 124 to 144 (YTIT…MWAL), 164 to 183 (AAGH…KVAV), 195 to 217 (FFTV…LGSL), 232 to 249 (LSFN…NLLY), 270 to 290 (INLF…LMLF), and 362 to 382 (TPIS…VFLY). An EamA domain is found at 123-228 (PYTITAFQLA…PIVGGVALAS (106 aa)).

Belongs to the TPT transporter family. PPT (TC 2.A.7.9) subfamily.

It is found in the plastid. The protein localises to the chloroplast membrane. Its function is as follows. Phosphoenolpyruvate/phosphate translocator that transports phosphoenolpyruvate (PEP) and dihydroxyacetone phosphate. The polypeptide is Phosphoenolpyruvate/phosphate translocator 3, chloroplastic (PPT3) (Oryza sativa subsp. japonica (Rice)).